The following is a 392-amino-acid chain: 2-octaprenyl-6-methoxyphenol hydroxylase (392 aa).

The protein belongs to the UbiH/COQ6 family. As to quaternary structure, component of the Ubi complex metabolon, which regroups five ubiquinone biosynthesis proteins (UbiE, UbiF, UbiG, UbiH and UbiI) and two accessory factors (UbiK and the lipid-binding protein UbiJ). FAD serves as cofactor.

The protein resides in the cytoplasm. The protein operates within cofactor biosynthesis; ubiquinone biosynthesis. Its function is as follows. Is likely an oxygenase that introduces the hydroxyl group at carbon four of 2-octaprenyl-6-methoxyphenol resulting in the formation of 2-octaprenyl-6-methoxy-1,4-benzoquinol. This chain is 2-octaprenyl-6-methoxyphenol hydroxylase (ubiH), found in Escherichia coli (strain K12).